We begin with the raw amino-acid sequence, 399 residues long: Elongation factor Tu (399 aa).

In terms of domain architecture, tr-type G spans 10 to 209 (KPHVNVGTIG…EVDKYIPTPQ (200 aa)). The segment at 19–26 (GHVDHGKT) is G1. 19 to 26 (GHVDHGKT) is a GTP binding site. Residue T26 coordinates Mg(2+). Residues 60 to 64 (GITIA) form a G2 region. The G3 stretch occupies residues 81–84 (DCPG). Residues 81-85 (DCPGH) and 136-139 (NKQD) each bind GTP. Residues 136-139 (NKQD) are G4. Residues 174–176 (SAL) are G5.

It belongs to the TRAFAC class translation factor GTPase superfamily. Classic translation factor GTPase family. EF-Tu/EF-1A subfamily. Monomer.

It is found in the cytoplasm. It carries out the reaction GTP + H2O = GDP + phosphate + H(+). In terms of biological role, GTP hydrolase that promotes the GTP-dependent binding of aminoacyl-tRNA to the A-site of ribosomes during protein biosynthesis. In Helicobacter hepaticus (strain ATCC 51449 / 3B1), this protein is Elongation factor Tu.